We begin with the raw amino-acid sequence, 596 residues long: NADH-quinone oxidoreductase subunit C/D (596 aa).

The interval methionine 1–glutamine 186 is NADH dehydrogenase I subunit C. The segment at aspartate 210–arginine 596 is NADH dehydrogenase I subunit D.

This sequence in the N-terminal section; belongs to the complex I 30 kDa subunit family. The protein in the C-terminal section; belongs to the complex I 49 kDa subunit family. NDH-1 is composed of 13 different subunits. Subunits NuoB, CD, E, F, and G constitute the peripheral sector of the complex.

The protein resides in the cell inner membrane. It carries out the reaction a quinone + NADH + 5 H(+)(in) = a quinol + NAD(+) + 4 H(+)(out). Functionally, NDH-1 shuttles electrons from NADH, via FMN and iron-sulfur (Fe-S) centers, to quinones in the respiratory chain. The immediate electron acceptor for the enzyme in this species is believed to be ubiquinone. Couples the redox reaction to proton translocation (for every two electrons transferred, four hydrogen ions are translocated across the cytoplasmic membrane), and thus conserves the redox energy in a proton gradient. The chain is NADH-quinone oxidoreductase subunit C/D from Salmonella dublin (strain CT_02021853).